The sequence spans 206 residues: Small ribosomal subunit protein uS4 (206 aa).

Positions 98–164 (MRLDNVVYRL…EKFKTFIENP (67 aa)) constitute an S4 RNA-binding domain.

Belongs to the universal ribosomal protein uS4 family. Part of the 30S ribosomal subunit. Contacts protein S5. The interaction surface between S4 and S5 is involved in control of translational fidelity.

Its function is as follows. One of the primary rRNA binding proteins, it binds directly to 16S rRNA where it nucleates assembly of the body of the 30S subunit. With S5 and S12 plays an important role in translational accuracy. This is Small ribosomal subunit protein uS4 from Clostridium tetani (strain Massachusetts / E88).